The following is a 99-amino-acid chain: MNPANYLILSALLFTIGTVGVLVRRNAIVVFMSIELMLNAVNLTLVTFSRINGTLDGQVMAFFVMVVAAAEVVIGLAIILSIFRTRRSASVDDVNLLKY.

3 helical membrane-spanning segments follow: residues 3–23, 28–48, and 59–79; these read PANYLILSALLFTIGTVGVLV, IVVFMSIELMLNAVNLTLVTF, and VMAFFVMVVAAAEVVIGLAII.

This sequence belongs to the complex I subunit 4L family. As to quaternary structure, NDH-1 is composed of 14 different subunits. Subunits NuoA, H, J, K, L, M, N constitute the membrane sector of the complex.

Its subcellular location is the cell membrane. It catalyses the reaction a quinone + NADH + 5 H(+)(in) = a quinol + NAD(+) + 4 H(+)(out). In terms of biological role, NDH-1 shuttles electrons from NADH, via FMN and iron-sulfur (Fe-S) centers, to quinones in the respiratory chain. The immediate electron acceptor for the enzyme in this species is believed to be a menaquinone. Couples the redox reaction to proton translocation (for every two electrons transferred, four hydrogen ions are translocated across the cytoplasmic membrane), and thus conserves the redox energy in a proton gradient. In Frankia alni (strain DSM 45986 / CECT 9034 / ACN14a), this protein is NADH-quinone oxidoreductase subunit K.